Here is a 115-residue protein sequence, read N- to C-terminus: MNPLIQSLTEGQLRTDIPSFRPGDTVRVHAKVVEGSRERIQIFEGVVISRKGQGISEMYTVRKISSGIGVERTFPIHTPRVEKIEVVRHGKVRRAKLYYLRALQGKAARIKEIRR.

It belongs to the bacterial ribosomal protein bL19 family.

Its function is as follows. This protein is located at the 30S-50S ribosomal subunit interface and may play a role in the structure and function of the aminoacyl-tRNA binding site. This is Large ribosomal subunit protein bL19 from Streptococcus equi subsp. zooepidemicus (strain H70).